Reading from the N-terminus, the 71-residue chain is DNA-directed RNA polymerase subunit omega (71 aa).

The protein belongs to the RNA polymerase subunit omega family. In terms of assembly, the RNAP catalytic core consists of 2 alpha, 1 beta, 1 beta' and 1 omega subunit. When a sigma factor is associated with the core the holoenzyme is formed, which can initiate transcription.

It carries out the reaction RNA(n) + a ribonucleoside 5'-triphosphate = RNA(n+1) + diphosphate. In terms of biological role, promotes RNA polymerase assembly. Latches the N- and C-terminal regions of the beta' subunit thereby facilitating its interaction with the beta and alpha subunits. The protein is DNA-directed RNA polymerase subunit omega of Aromatoleum aromaticum (strain DSM 19018 / LMG 30748 / EbN1) (Azoarcus sp. (strain EbN1)).